Consider the following 268-residue polypeptide: Magnesium dechelatase SGR1, chloroplastic (268 aa).

A chloroplast-targeting transit peptide spans 1-48 (MCSLSAIMLLPTKLKPAYSDKRSNSSSSSSLFFNNRRSKKKNQSIVPV).

Belongs to the staygreen family. In terms of assembly, interacts with HCAR, the chlorophyll catabolic enzymes (CCEs) NYC1, PAO and RCCR, and the LHCII complex. Part of a SGR1-CCE-LHCII complex, which acts in chlorophyll breakdown. Expressed in roots, leaves, seeds, flowers, buds, petals, sepals and siliques.

The protein resides in the plastid. It localises to the chloroplast thylakoid membrane. It carries out the reaction chlorophyll a + 2 H(+) = pheophytin a + Mg(2+). Functionally, magnesium chelatase involved in chlorophyll a degradation in the chlorophyll-protein complexes of photosystem I (PSI) and photosystem II (PSII). Contributes to the degradation of PSI and PSII in the thylakoid membranes. Required to trigger chlorophyll degradation during natural and dark-induced leaf senescence. Mediates chlorophyll degradation during embryo degreening. Recombinant SGR1 possesses high dechelating activity against chlorophyll a, very low activity against chlorophyllide a, and no activity against chlorophyll b. Magnesium dechelation of chlorophyll a by SGR1 activates chlorophyll b degradation by inducing the expression of NYC1, an enzyme involved in chlorophyll b degradation. The sequence is that of Magnesium dechelatase SGR1, chloroplastic from Arabidopsis thaliana (Mouse-ear cress).